The primary structure comprises 507 residues: Glutamyl-tRNA(Gln) amidotransferase subunit A, mitochondrial (507 aa).

Residues 29-51 (THPPEPIPPPPPPAPSSSPSPKQ) form a disordered region. Positions 31–46 (PPEPIPPPPPPAPSSS) are enriched in pro residues. Active-site charge relay system residues include Lys-57 and Ser-135. Ser-159 (acyl-ester intermediate) is an active-site residue.

The protein belongs to the amidase family. GatA subfamily. In terms of assembly, subunit of the heterotrimeric GatCAB amidotransferase (AdT) complex, composed of A, B and C subunits.

It is found in the mitochondrion. It carries out the reaction L-glutamyl-tRNA(Gln) + L-glutamine + ATP + H2O = L-glutaminyl-tRNA(Gln) + L-glutamate + ADP + phosphate + H(+). Functionally, allows the formation of correctly charged Gln-tRNA(Gln) through the transamidation of misacylated Glu-tRNA(Gln) in the mitochondria. The reaction takes place in the presence of glutamine and ATP through an activated gamma-phospho-Glu-tRNA(Gln). This chain is Glutamyl-tRNA(Gln) amidotransferase subunit A, mitochondrial, found in Podospora anserina (strain S / ATCC MYA-4624 / DSM 980 / FGSC 10383) (Pleurage anserina).